The following is a 74-amino-acid chain: Large ribosomal subunit protein bL27c (74 aa).

Belongs to the bacterial ribosomal protein bL27 family.

The protein localises to the plastid. The protein resides in the chloroplast. The protein is Large ribosomal subunit protein bL27c (rpl27) of Calyptrosphaera sphaeroidea.